Reading from the N-terminus, the 2667-residue chain is eIF-2-alpha kinase activator GCN1 (2667 aa).

HEAT repeat units lie at residues Asp-19–Ser-56, Gln-95–Thr-132, Ser-159–Met-198, Asp-293–Val-330, Leu-336–Asp-375, Ser-398–Ile-439, Glu-466–Asn-503, and Leu-794–Val-832. The interval Arg-842–Glu-879 is disordered. HEAT repeat units lie at residues Pro-929 to Ser-967, Leu-985 to Asn-1024, Gly-1085 to Pro-1122, His-1199 to Leu-1237, Gly-1290 to Ala-1330, Pro-1333 to Lys-1370, Gln-1371 to Leu-1407, Leu-1412 to Arg-1450, Pro-1454 to Gly-1491, His-1492 to Lys-1529, Ser-1533 to Asn-1570, Glu-1572 to Asp-1608, Ala-1610 to Pro-1647, Pro-1652 to Glu-1689, Asn-1691 to Ile-1728, Ser-1729 to Asp-1766, Pro-1770 to Val-1807, and Gly-1809 to Gly-1845. The tract at residues Ser-1853–Ile-1875 is disordered. 10 HEAT repeats span residues Glu-1882–Lys-1919, Glu-1923–Asp-1960, Ile-1962–Thr-1998, Pro-2002–Ser-2039, Lys-2040–Ser-2078, Val-2080–Glu-2110, Val-2114–Glu-2152, Gly-2154–Met-2190, Glu-2193–Lys-2230, and Lys-2264–Ala-2301. The tract at residues Gly-2265–Leu-2412 is RWDBD region. The HEAT 37; degenerate repeat unit spans residues Gln-2326–Ile-2348. One copy of the HEAT 38; degenerate repeat lies at Phe-2349 to Ser-2385. 4 HEAT repeats span residues Asp-2387 to Lys-2421, Ala-2425 to Ser-2462, Pro-2508 to Leu-2545, and Thr-2546 to Gln-2583.

This sequence belongs to the GCN1 family. As to quaternary structure, interacts with eif2ak4/gcn2; this interaction stimulates the eif2ak4/gcn2 kinase activity and is impaired by impact upon a variety of stress conditions, such as amino acid depletion, UV-C irradiation, proteasome inhibitor treatment and glucose deprivation. Interacts with impact; this prevents the interaction of gcn1 with eif2ak4/gcn2 and inhibits eif2ak4/gcn2 kinase activity.

It is found in the cytoplasm. In terms of biological role, ribosome collision sensor that activates a translation quality control pathway when a ribosome has stalled during translation. Directly binds to the ribosome and acts as a sentinel for colliding ribosomes. Gcn1 also acts as a positive activator of the integrated stress response (ISR) by mediating activation of eif2ak4/gcn2 in response to amino acid starvation. Interaction with eif2ak4/gcn2 on translating ribosomes stimulates eif2ak4/gcn2 kinase activity, leading to phosphorylation of eukaryotic translation initiation factor 2 (eIF-2-alpha/eif2s1). EIF2S1/eIF-2-alpha phosphorylation converts EIF2S1/eIF-2-alpha into a global protein synthesis inhibitor, leading to a global attenuation of cap-dependent translation, and thus to a reduced overall utilization of amino acids, while concomitantly initiating the preferential translation of ISR-specific mRNAs, such as the transcriptional activator atf4, and hence allowing atf4-mediated reprogramming of amino acid biosynthetic gene expression to alleviate nutrient depletion. The chain is eIF-2-alpha kinase activator GCN1 from Dictyostelium discoideum (Social amoeba).